A 2789-amino-acid chain; its full sequence is Multiple epidermal growth factor-like domains protein 8 (2789 aa).

Residues methionine 1–alanine 27 form the signal peptide. At glycine 28–aspartate 2591 the chain is on the extracellular side. Intrachain disulfides connect cysteine 30–cysteine 57, cysteine 142–cysteine 152, cysteine 146–cysteine 158, cysteine 174–cysteine 184, cysteine 178–cysteine 191, and cysteine 193–cysteine 202. The region spanning cysteine 30–serine 140 is the CUB 1 domain. An N-linked (GlcNAc...) asparagine glycan is attached at asparagine 50. 2 consecutive EGF-like domains span residues arginine 138 to aspartate 168 and glycine 170 to aspartate 203. Kelch repeat units follow at residues leucine 241–tryptophan 287, leucine 290–alanine 338, tryptophan 346–proline 399, threonine 402–alanine 453, tyrosine 459–serine 511, and valine 525–proline 575. PSI domains follow at residues tyrosine 561–glutamine 613, alanine 847–proline 899, and leucine 900–proline 947. N-linked (GlcNAc...) asparagine glycosylation is present at asparagine 1048. In terms of domain architecture, EGF-like 3; calcium-binding spans aspartate 1074 to asparagine 1115. Cystine bridges form between cysteine 1078-cysteine 1091, cysteine 1085-cysteine 1100, cysteine 1102-cysteine 1114, cysteine 1163-cysteine 1171, cysteine 1165-cysteine 1179, cysteine 1182-cysteine 1191, cysteine 1194-cysteine 1208, cysteine 1211-cysteine 1224, cysteine 1213-cysteine 1231, cysteine 1233-cysteine 1242, cysteine 1245-cysteine 1259, cysteine 1263-cysteine 1302, cysteine 1336-cysteine 1367, cysteine 1407-cysteine 1421, cysteine 1415-cysteine 1433, and cysteine 1435-cysteine 1444. Laminin EGF-like domains follow at residues cysteine 1163–proline 1210 and cysteine 1211–arginine 1261. An N-linked (GlcNAc...) asparagine glycan is attached at asparagine 1226. One can recognise a CUB 2 domain in the interval cysteine 1263–alanine 1405. Asparagine 1271 carries an N-linked (GlcNAc...) asparagine glycan. Threonine 1353 is modified (phosphothreonine). The region spanning glycine 1403–arginine 1445 is the EGF-like 4 domain. Kelch repeat units lie at residues threonine 1522–alanine 1570, alanine 1580–arginine 1629, serine 1632–tyrosine 1679, serine 1685–alanine 1735, threonine 1740–alanine 1787, and arginine 1796–glycine 1841. PSI domains follow at residues proline 1820–serine 1860, glutamate 1868–arginine 1923, proline 2004–serine 2062, and glycine 2064–proline 2121. A glycan (N-linked (GlcNAc...) asparagine) is linked at asparagine 2010. In terms of domain architecture, EGF-like 5 spans proline 2122 to threonine 2160. Cystine bridges form between cysteine 2126/cysteine 2139 and cysteine 2133/cysteine 2148. 2 N-linked (GlcNAc...) asparagine glycosylation sites follow: asparagine 2158 and asparagine 2173. Intrachain disulfides connect cysteine 2197–cysteine 2205, cysteine 2199–cysteine 2214, cysteine 2217–cysteine 2226, cysteine 2229–cysteine 2243, cysteine 2324–cysteine 2333, cysteine 2326–cysteine 2341, cysteine 2343–cysteine 2368, and cysteine 2371–cysteine 2385. Laminin EGF-like domains are found at residues cysteine 2197 to proline 2245 and cysteine 2324 to arginine 2387. Positions valine 2468–proline 2508 are disordered. Positions glutamine 2471–aspartate 2484 are enriched in pro residues. Residues leucine 2592–leucine 2612 traverse the membrane as a helical segment. The Cytoplasmic segment spans residues leucine 2613–leucine 2789. A compositionally biased stretch (gly residues) spans glycine 2762–lysine 2776. The segment at glycine 2762–leucine 2789 is disordered. Polar residues predominate over residues serine 2780–leucine 2789.

In terms of tissue distribution, highest expression in brain, testis and kidney.

The protein localises to the membrane. Functionally, acts as a negative regulator of hedgehog signaling. This is Multiple epidermal growth factor-like domains protein 8 (Megf8) from Mus musculus (Mouse).